Consider the following 1161-residue polypeptide: Nardilysin (1161 aa).

A signal peptide spans 1-18 (MLRRVAVAAVFATGRKLR). 2 disordered regions span residues 42-105 (KPFP…KSPS) and 130-218 (VEGK…KKTT). Phosphoserine occurs at positions 85, 91, and 93. Residues 138-209 (TDEEEEEEEE…EENELEELEE (72 aa)) show a composition bias toward acidic residues. His-244 provides a ligand contact to Zn(2+). The active-site Proton acceptor is the Glu-247. Zn(2+) is bound by residues His-248 and Glu-325.

The protein belongs to the peptidase M16 family. As to quaternary structure, interacts with BACE1 and NRG1. Requires Zn(2+) as cofactor. Testis, and in a lower level in brain, heart and adrenal glands.

It localises to the mitochondrion. The protein localises to the cell projection. It is found in the dendrite. The catalysed reaction is Hydrolysis of polypeptides, preferably at -Xaa-|-Arg-Lys-, and less commonly at -Arg-|-Arg-Xaa-, in which Xaa is not Arg or Lys.. Functionally, cleaves peptide substrates on the N-terminus of arginine residues in dibasic pairs. Is a critical activator of BACE1- and ADAM17-mediated pro-neuregulin ectodomain shedding, involved in the positive regulation of axonal maturation and myelination. Required for proper functioning of 2-oxoglutarate dehydrogenase (OGDH). This chain is Nardilysin, found in Rattus norvegicus (Rat).